The sequence spans 476 residues: CDK5 and ABL1 enzyme substrate 2 (476 aa).

A disordered region spans residues 1 to 119 (MAAAAAGGAP…GLGLDGQRQR (119 aa)). A compositionally biased stretch (basic residues) spans 30–40 (PRRRGDSRRRQ). Over residues 65 to 96 (PAPPPPPPTEAREAPAPPPAPPGGLPGLPARP) the composition is skewed to pro residues. Phosphoserine is present on residues Ser128 and Ser206. The segment at 256 to 295 (DSHGLLPQPRPSIPRAPPGSRHKPVPTKSTPAGTELGSDG) is disordered. A compositionally biased stretch (pro residues) spans 263–272 (QPRPSIPRAP).

The protein belongs to the cyclin family. As to quaternary structure, binds to CDK3, CDK5 and ABL1. The C-terminal cyclin-box-like region binds to CDK5. Widely expressed.

Unknown. Probably involved in G1-S cell cycle transition. The sequence is that of CDK5 and ABL1 enzyme substrate 2 (Cables2) from Mus musculus (Mouse).